The primary structure comprises 126 residues: FCS-Like Zinc finger 7 (126 aa).

The FLZ-type zinc finger occupies Ser72–Thr116.

This sequence belongs to the FLZ family. In terms of assembly, interacts with KIN10 and KIN11 via its FLZ-type zinc finger domain. Interacts with KINB3 via its N-terminal part. Forms homodimer and heterodimer with FLZ1, FLZ2 and FLZ15 in vitro.

It localises to the cytoplasm. The protein localises to the nucleus. May act as an adapter to facilitate the interaction of SnRK1 complex with effector proteins, conferring tissue- and stimulus-type specific differences in the SnRK1 regulation pathway. The chain is FCS-Like Zinc finger 7 from Arabidopsis thaliana (Mouse-ear cress).